We begin with the raw amino-acid sequence, 288 residues long: Elongation factor Ts (288 aa).

The tract at residues threonine 82–valine 85 is involved in Mg(2+) ion dislocation from EF-Tu.

Belongs to the EF-Ts family.

It localises to the cytoplasm. In terms of biological role, associates with the EF-Tu.GDP complex and induces the exchange of GDP to GTP. It remains bound to the aminoacyl-tRNA.EF-Tu.GTP complex up to the GTP hydrolysis stage on the ribosome. This is Elongation factor Ts from Chlorobium luteolum (strain DSM 273 / BCRC 81028 / 2530) (Pelodictyon luteolum).